The sequence spans 170 residues: Der GTPase-activating protein YihI (170 aa).

Disordered regions lie at residues 1-96 (MKKP…LSPQ) and 145-170 (LSYD…RGGN). A compositionally biased stretch (basic and acidic residues) spans 20 to 30 (TREELNQEARD). Positions 31–40 (RKRLKKHRGH) are enriched in basic residues. Positions 147–159 (YDDEEDEEEDEKQ) are enriched in acidic residues.

It belongs to the YihI family. In terms of assembly, interacts with Der.

Its function is as follows. A GTPase-activating protein (GAP) that modifies Der/EngA GTPase function. May play a role in ribosome biogenesis. The sequence is that of Der GTPase-activating protein YihI from Salmonella arizonae (strain ATCC BAA-731 / CDC346-86 / RSK2980).